The sequence spans 546 residues: Glutamate--tRNA ligase (546 aa).

The 'HIGH' region signature appears at 41–51; it reads PSPTGFQHIGG. A 'KMSKS' region motif is present at residues 293-297; the sequence is KLSKR. Residue lysine 296 participates in ATP binding.

Belongs to the class-I aminoacyl-tRNA synthetase family. Glutamate--tRNA ligase type 1 subfamily. Monomer.

Its subcellular location is the cytoplasm. The catalysed reaction is tRNA(Glu) + L-glutamate + ATP = L-glutamyl-tRNA(Glu) + AMP + diphosphate. Its function is as follows. Catalyzes the attachment of glutamate to tRNA(Glu) in a two-step reaction: glutamate is first activated by ATP to form Glu-AMP and then transferred to the acceptor end of tRNA(Glu). This chain is Glutamate--tRNA ligase, found in Clostridium perfringens (strain 13 / Type A).